We begin with the raw amino-acid sequence, 353 residues long: Methylthioribose-1-phosphate isomerase (353 aa).

Residues 48–50, Arg94, and Gln201 contribute to the substrate site; that span reads RGA. Catalysis depends on Asp242, which acts as the Proton donor. Residue 252 to 253 coordinates substrate; it reads NK.

It belongs to the eIF-2B alpha/beta/delta subunits family. MtnA subfamily.

It catalyses the reaction 5-(methylsulfanyl)-alpha-D-ribose 1-phosphate = 5-(methylsulfanyl)-D-ribulose 1-phosphate. It functions in the pathway amino-acid biosynthesis; L-methionine biosynthesis via salvage pathway; L-methionine from S-methyl-5-thio-alpha-D-ribose 1-phosphate: step 1/6. In terms of biological role, catalyzes the interconversion of methylthioribose-1-phosphate (MTR-1-P) into methylthioribulose-1-phosphate (MTRu-1-P). In Roseiflexus sp. (strain RS-1), this protein is Methylthioribose-1-phosphate isomerase.